Reading from the N-terminus, the 164-residue chain is Phosphopantetheine adenylyltransferase (164 aa).

Ser-10 is a binding site for substrate. Residues 10–11 (SF) and His-18 each bind ATP. Residues Lys-42, Met-74, and Arg-88 each coordinate substrate. ATP contacts are provided by residues 89 to 91 (GLR), Glu-99, and 124 to 130 (YFFVSAR).

It belongs to the bacterial CoaD family. As to quaternary structure, homohexamer. Mg(2+) is required as a cofactor.

The protein localises to the cytoplasm. The catalysed reaction is (R)-4'-phosphopantetheine + ATP + H(+) = 3'-dephospho-CoA + diphosphate. Its pathway is cofactor biosynthesis; coenzyme A biosynthesis; CoA from (R)-pantothenate: step 4/5. Reversibly transfers an adenylyl group from ATP to 4'-phosphopantetheine, yielding dephospho-CoA (dPCoA) and pyrophosphate. The sequence is that of Phosphopantetheine adenylyltransferase from Anaeromyxobacter dehalogenans (strain 2CP-C).